The primary structure comprises 461 residues: Dihydrolipoyl dehydrogenase (461 aa).

FAD contacts are provided by residues 33–41 (EAAEVGGVC), Lys50, and Ala112. Cys41 and Cys46 are oxidised to a cystine. NAD(+)-binding positions include 173–177 (GGGAV), Glu196, and 263–266 (AVGR). FAD-binding residues include Asp306 and Ala314. His437 functions as the Proton acceptor in the catalytic mechanism.

The protein belongs to the class-I pyridine nucleotide-disulfide oxidoreductase family. In terms of assembly, homodimer. FAD serves as cofactor.

The protein resides in the membrane. It carries out the reaction N(6)-[(R)-dihydrolipoyl]-L-lysyl-[protein] + NAD(+) = N(6)-[(R)-lipoyl]-L-lysyl-[protein] + NADH + H(+). Has chromate reductase activity. The sequence is that of Dihydrolipoyl dehydrogenase from Thermus scotoductus (strain ATCC 700910 / SA-01).